We begin with the raw amino-acid sequence, 301 residues long: Light-independent protochlorophyllide reductase iron-sulfur ATP-binding protein (301 aa).

Positions 1–26 are disordered; sequence MSNGSVPVSGIGGRGDGEGSSQVHME. ATP-binding positions include 44–49 and lysine 73; that span reads GIGKST. Serine 48 is a Mg(2+) binding site. Residues cysteine 129 and cysteine 163 each contribute to the [4Fe-4S] cluster site. 214 to 215 is a binding site for ATP; sequence NR.

Belongs to the NifH/BchL/ChlL family. As to quaternary structure, homodimer. Protochlorophyllide reductase is composed of three subunits; BchL, BchN and BchB. [4Fe-4S] cluster serves as cofactor.

It carries out the reaction chlorophyllide a + oxidized 2[4Fe-4S]-[ferredoxin] + 2 ADP + 2 phosphate = protochlorophyllide a + reduced 2[4Fe-4S]-[ferredoxin] + 2 ATP + 2 H2O. Its pathway is porphyrin-containing compound metabolism; bacteriochlorophyll biosynthesis (light-independent). In terms of biological role, component of the dark-operative protochlorophyllide reductase (DPOR) that uses Mg-ATP and reduced ferredoxin to reduce ring D of protochlorophyllide (Pchlide) to form chlorophyllide a (Chlide). This reaction is light-independent. The L component serves as a unique electron donor to the NB-component of the complex, and binds Mg-ATP. The polypeptide is Light-independent protochlorophyllide reductase iron-sulfur ATP-binding protein (Halorhodospira halophila (strain DSM 244 / SL1) (Ectothiorhodospira halophila (strain DSM 244 / SL1))).